Reading from the N-terminus, the 584-residue chain is MKQELHHTLLGCGFRYTPAKQMPKGILLDTKSRRKGYYVKEYSTKGGVFVIALVLWNDPHIQLPFAYILQQPEQYKGRLLPHINFGFCLCYVTQMEADWNSNDLKSTYQDVDEQIQLTLDNSVASVESGTSNDVELEGEFSAYWQSEEELYLLAKPSRKAQLKAHLVEAELSSGSIRREYVAACSEQSEELVKWLNQRKFDESSLQEVSITTHCISVKPNRLAGVNWPPSCLREVLSWLKLVDYSAHARTVTLLMAKRTKRHILLFDVEGQDELAVYLELNLDVIGKRYFGRNAARKRNINNEAALLGGKFVSANFKRLGVTRADRDTLLSRNQSRPDVGNLSQKRIALIGCGTIGGYLAELLLRSGAGCGENYFHLYDNDSFKPHNFARHSLTAHNFGLAKSIALANSLKEAVHIAQSIKGIDRQFPIQADVLSKYDIVIDATGRPPVSKRLAAVARTLIADIRPVLIHAFNDGNGRASKVLVDDGRCCYGCMMADPAVYRNNIDLRFEGIDLAKEKHISCGSTYTPYDAAVSHITAALAQEAVLNTLEHTLPWNYSEHMLDGSRSKKPRTLKRFSGCNICDE.

Residues 1-137 are E2-like domain; that stretch reads MKQELHHTLL…SGTSNDVELE (137 aa). Cys90 serves as the catalytic For E2-like domain. The linker domain stretch occupies residues 138-338; that stretch reads GEFSAYWQSE…LLSRNQSRPD (201 aa). Residues 339 to 584 form an adenylation plus E1-like domain region; that stretch reads VGNLSQKRIA…RFSGCNICDE (246 aa). The active-site For E1-like domain is Cys522.

It in the C-terminal section; belongs to the HesA/MoeB/ThiF family. As to quaternary structure, interacts with CD-NTase DncV in the presence and absence of phage T2. A Cap2 dimer is bound on either side by a DncV monomer.

Its function is as follows. CD-NTase priming component of a CBASS antiviral system. CBASS (cyclic oligonucleotide-based antiphage signaling system) provides immunity against bacteriophages. The CD-NTase protein (DncV) synthesizes cyclic nucleotides in response to infection; these serve as specific second messenger signals. The signals activate a diverse range of effectors, leading to bacterial cell death and thus abortive phage infection. A type II-A(GA) CBASS system. Functionally, primes DncV; acts as a protein transferase, conjugating DncV, the CD-NTase, to unidentified target(s) in the cell via an E1-E2 ubiquitin transferase-like mechanism. During the conjugation reaction DncV is probably transiently attached to AMP. Protein conjugation requires ATP. Protects E.coli against phage infection. When the CBASS operon (capV-dncV-cap2-cap3) is introduced in E.coli MG1655 there is about 100-fold protection against phages P1 and T2. When the operon is introduced in E.coli MG1655 there is a more than 10(3) decrease in the efficiency of T2 plaque formation. Protects 100-fold against phage T5, offers no protection against T7. When the operon is introduced in E.coli MG1655 it protects against phages T2, T4, T5 and T6. Another paper shows the operon confers protection against phages P1, T2, T5 and T6 but not T4 or lambda. The sequence is that of ATP-dependent ubiquitin transferase-like protein Cap2 from Vibrio cholerae serotype O1 (strain ATCC 39315 / El Tor Inaba N16961).